We begin with the raw amino-acid sequence, 332 residues long: Probable thc operon regulatory protein (332 aa).

The region spanning 227 to 328 is the HTH araC/xylS-type domain; sequence RLAVDYLEAH…GVSPSEDLRT (102 aa). 2 DNA-binding regions (H-T-H motif) span residues 244–265 and 295–318; these read AQVARNVGVSVRSLQVGFQNSL and VTEIAQRWGFLHVGRFAGEYKQTF.

Functionally, probably involved in the positive regulation of the thc operon for the degradation of the thiocarbamate herbicide EPTC. The sequence is that of Probable thc operon regulatory protein (thcR) from Rhodococcus erythropolis (Arthrobacter picolinophilus).